A 381-amino-acid chain; its full sequence is MKRKAVLEAFSDSEDEDEKKLKGPQLITGFSAEEGVHYQNETIQRIHEKKRAPKIIHIASDENWMEKRKARFKKKETEVHEKPSQLPDSGLNYGLNIRVASSSAADNEIVDWKANNSNEKAQNKIATNKESTDILPEEVQLVLNDLNDDVKSANSANLQPITTNVVNEKDAYRKDIDELPEPSNMKDYSEIPVEEFGAAMLRGMGWNGQLSSKDAFDVNQRPTFLGMGAKPVDSELTELDIWKNPKKTMFLPVKPLESNSALNSQNEHTEVQKKSNSIDNLTPSSELFRKRSRDNNLSRESSVSSKHLDYNSRNYNKRDRDPDRTKYREYHSERRKQHRTDRYSDDYYQGRSYSYKKRSHRSDRYTERENPDRSYRSTRTL.

A disordered region spans residues 1–21 (MKRKAVLEAFSDSEDEDEKKL). S11 and S13 each carry phosphoserine. Residues 104–157 (AADNEIVDWKANNSNEKAQNKIATNKESTDILPEEVQLVLNDLNDDVKSANSAN) are a coiled coil. Residues 262 to 381 (LNSQNEHTEV…DRSYRSTRTL (120 aa)) are disordered. Over residues 274 to 285 (KSNSIDNLTPSS) the composition is skewed to polar residues. A phosphoserine mark is found at S275 and S277. Composition is skewed to basic and acidic residues over residues 287–297 (LFRKRSRDNNL), 306–332 (KHLD…EYHS), and 362–375 (SDRY…DRSY).

This sequence belongs to the SPP2 family. Belongs to the 40S cdc5-associated complex (or cwf complex), a spliceosome sub-complex reminiscent of a late-stage spliceosome composed of the U2, U5 and U6 snRNAs and at least brr2, cdc5, cwf2/prp3, cwf3/syf1, cwf4/syf3, cwf5/ecm2, spp42/cwf6, cwf7/spf27, cwf8, cwf9, cwf10, cwf11, cwf12, prp45/cwf13, cwf14, cwf15, cwf16, cwf17, cwf18, cwf19, cwf20, cwf21, cwf22, cwf23, cwf24, cwf25, cwf26, cyp7/cwf27, cwf28, cwf29/ist3, lea1, msl1, prp5/cwf1, prp10, prp12/sap130, prp17, prp22, sap61, sap62, sap114, sap145, slu7, smb1, smd1, smd3, smf1, smg1 and syf2.

It localises to the nucleus. In terms of biological role, involved in spliceosome maturation and the first step of pre-mRNA splicing. The protein is Pre-mRNA-splicing factor cwf28 (cwf28) of Schizosaccharomyces pombe (strain 972 / ATCC 24843) (Fission yeast).